We begin with the raw amino-acid sequence, 314 residues long: MVAPAGEQGRSSTALSDNPFDAKAWRLVDGFDDLTDITYHRHVDDATVRVAFNRPEVRNAFRPHTVDELYRVLDHARMSPDVGVVLLTGNGPSPKDGGWAFCSGGDQRIRGRSGYQYASGDTADTVDVARAGRLHILEVQRLIRFMPKVVICLVNGWAAGGGHSLHVVCDLTLASREYARFKQTDADVGSFDGGYGSAYLARQVGQKFAREIFFLGRTYTAEQMHQMGAVNAVAEHAELETVGLQWAAEINAKSPQAQRMLKFAFNLLDDGLVGQQLFAGEATRLAYMTDEAVEGRDAFLQKRPPDWSPFPRYF.

Residues R58, 103-107, Y115, 157-161, T184, S190, Y287, and K302 each bind substrate; these read SGGDQ and WAAGG.

Belongs to the enoyl-CoA hydratase/isomerase family. MenB subfamily.

It catalyses the reaction 2-succinylbenzoyl-CoA + H(+) = 1,4-dihydroxy-2-naphthoyl-CoA + H2O. It functions in the pathway quinol/quinone metabolism; 1,4-dihydroxy-2-naphthoate biosynthesis; 1,4-dihydroxy-2-naphthoate from chorismate: step 6/7. The protein operates within quinol/quinone metabolism; menaquinone biosynthesis. In terms of biological role, converts o-succinylbenzoyl-CoA (OSB-CoA) to 1,4-dihydroxy-2-naphthoyl-CoA (DHNA-CoA). The chain is 1,4-dihydroxy-2-naphthoyl-CoA synthase from Mycobacterium tuberculosis (strain CDC 1551 / Oshkosh).